The sequence spans 25 residues: Unknown protein 4 (25 aa).

The span at 1 to 10 (IEHNAEEIRK) shows a compositional bias: basic and acidic residues. The segment at 1–25 (IEHNAEEIRKTAIRTAVQNTAQQTK) is disordered. Over residues 16-25 (AVQNTAQQTK) the composition is skewed to polar residues.

This is Unknown protein 4 from Lonomia obliqua (Moth).